The primary structure comprises 28 residues: Ranatuerin-2BYb (28 aa).

Cys23 and Cys28 are oxidised to a cystine.

Expressed by the skin glands.

The protein resides in the secreted. In terms of biological role, antibacterial activity against Gram-negative bacterium E.coli. Very weak hemolysis activity. The chain is Ranatuerin-2BYb from Rana boylii (Foothill yellow-legged frog).